Here is a 383-residue protein sequence, read N- to C-terminus: MAKHLFTSESVSEGHPDKIADQISDAVLDAILAQDPKARVACETYVKTGMVLVGGEVTTSAWVDIEELTRKTVREIGYTHSDMGFDADSCAVLNAIGKQSPDINQGVDRADPKEQGAGDQGLMFGYASNETEILMPAPITYAHALVKRQSEVRKNGTLPWLRPDAKSQVTFAYENNKIVGIDAIVLSTQHSPDIAQADLIEGVMETIIKPVLPAQWLSKDTKYFINPTGRFVIGGPMGDCGLTGRKIIVDTYGGMARHGGGAFSGKDPSKVDRSAAYAARYVAKNIVAAGLADRCELQVSYAIGVAEPTSISIETFGTGKVSEEVLIKLVRQHFDLRPYGLTEMLNLARPIYQATAAYGHFGRNEFPWEATDKAEALRADAGL.

His-15 contributes to the ATP binding site. Asp-17 serves as a coordination point for Mg(2+). Glu-43 lines the K(+) pocket. L-methionine-binding residues include Glu-56 and Gln-99. Residues Gln-99–Arg-109 form a flexible loop region. ATP contacts are provided by residues Asp-164 to Lys-166, Arg-230 to Phe-231, Asp-239, Arg-245 to Lys-246, Ala-262, and Lys-266. L-methionine is bound at residue Asp-239. L-methionine is bound at residue Lys-270.

It belongs to the AdoMet synthase family. Homotetramer; dimer of dimers. Mg(2+) is required as a cofactor. The cofactor is K(+).

It is found in the cytoplasm. The catalysed reaction is L-methionine + ATP + H2O = S-adenosyl-L-methionine + phosphate + diphosphate. It functions in the pathway amino-acid biosynthesis; S-adenosyl-L-methionine biosynthesis; S-adenosyl-L-methionine from L-methionine: step 1/1. In terms of biological role, catalyzes the formation of S-adenosylmethionine (AdoMet) from methionine and ATP. The overall synthetic reaction is composed of two sequential steps, AdoMet formation and the subsequent tripolyphosphate hydrolysis which occurs prior to release of AdoMet from the enzyme. The polypeptide is S-adenosylmethionine synthase (Shewanella putrefaciens (strain CN-32 / ATCC BAA-453)).